Here is a 614-residue protein sequence, read N- to C-terminus: Zinc metalloproteinase-disintegrin-like BmMP (614 aa).

The N-terminal stretch at 1-20 (MIQALLVTICLAVFPYQGSS) is a signal peptide. A propeptide spanning residues 21–188 (IILESGNVND…WESDEPIRNA (168 aa)) is cleaved from the precursor. An N-linked (GlcNAc...) asparagine glycan is attached at N187. Positions 205–401 (KYIEFYVAVD…DRPQCILNKP (197 aa)) constitute a Peptidase M12B domain. 17 disulfides stabilise this stretch: C316–C396, C356–C380, C359–C364, C412–C441, C423–C436, C425–C431, C435–C458, C449–C455, C454–C480, C467–C487, C474–C506, C499–C511, C518–C568, C533–C576, C546–C556, C563–C602, and C596–C607. Residue H341 participates in Zn(2+) binding. The active site involves E342. H345 and H351 together coordinate Zn(2+). The 87-residue stretch at 409 to 495 (PAICGNYFVE…ECPTDIFRRN (87 aa)) folds into the Disintegrin domain. The short motif at 473 to 475 (DCD) is the D/ECD-tripeptide element.

Belongs to the venom metalloproteinase (M12B) family. P-III subfamily. P-IIIa sub-subfamily. Monomer. Requires Zn(2+) as cofactor. Expressed by the venom gland.

Its subcellular location is the secreted. Its function is as follows. Snake venom zinc metalloproteinase that inhibits platelet aggregation and degrades fibrinogen. This chain is Zinc metalloproteinase-disintegrin-like BmMP, found in Bungarus multicinctus (Many-banded krait).